We begin with the raw amino-acid sequence, 293 residues long: Pyridoxal 5'-phosphate synthase subunit PdxS (293 aa).

Residue D25 participates in D-ribose 5-phosphate binding. K82 acts as the Schiff-base intermediate with D-ribose 5-phosphate in catalysis. G154 contributes to the D-ribose 5-phosphate binding site. Residue R166 participates in D-glyceraldehyde 3-phosphate binding. D-ribose 5-phosphate contacts are provided by residues G215 and 236–237 (GS).

The protein belongs to the PdxS/SNZ family. As to quaternary structure, in the presence of PdxT, forms a dodecamer of heterodimers.

The enzyme catalyses aldehydo-D-ribose 5-phosphate + D-glyceraldehyde 3-phosphate + L-glutamine = pyridoxal 5'-phosphate + L-glutamate + phosphate + 3 H2O + H(+). The protein operates within cofactor biosynthesis; pyridoxal 5'-phosphate biosynthesis. In terms of biological role, catalyzes the formation of pyridoxal 5'-phosphate from ribose 5-phosphate (RBP), glyceraldehyde 3-phosphate (G3P) and ammonia. The ammonia is provided by the PdxT subunit. Can also use ribulose 5-phosphate and dihydroxyacetone phosphate as substrates, resulting from enzyme-catalyzed isomerization of RBP and G3P, respectively. This chain is Pyridoxal 5'-phosphate synthase subunit PdxS, found in Thermotoga petrophila (strain ATCC BAA-488 / DSM 13995 / JCM 10881 / RKU-1).